A 155-amino-acid polypeptide reads, in one-letter code: Large-conductance mechanosensitive channel (155 aa).

The next 2 membrane-spanning stretches (helical) occupy residues 25–45 (VLDL…VTSL) and 98–118 (GDFI…FLIV).

This sequence belongs to the MscL family. As to quaternary structure, homopentamer.

The protein localises to the cell inner membrane. Channel that opens in response to stretch forces in the membrane lipid bilayer. May participate in the regulation of osmotic pressure changes within the cell. This Novosphingobium aromaticivorans (strain ATCC 700278 / DSM 12444 / CCUG 56034 / CIP 105152 / NBRC 16084 / F199) protein is Large-conductance mechanosensitive channel.